The chain runs to 306 residues: Mycothiol acetyltransferase (306 aa).

N-acetyltransferase domains follow at residues 5–162 (VWAE…TFVP) and 155–306 (VRLR…AQGS). Acetyl-CoA is bound by residues 82 to 84 (LIV) and 90 to 95 (RRGHGT). 1D-myo-inositol 2-(L-cysteinylamino)-2-deoxy-alpha-D-glucopyranoside is bound by residues Glu182, Lys222, and Glu238. Residues 242–244 (VGV) and 249–255 (QGGGLGK) each bind acetyl-CoA. Residue Tyr276 participates in 1D-myo-inositol 2-(L-cysteinylamino)-2-deoxy-alpha-D-glucopyranoside binding.

The protein belongs to the acetyltransferase family. MshD subfamily. In terms of assembly, monomer.

It carries out the reaction 1D-myo-inositol 2-(L-cysteinylamino)-2-deoxy-alpha-D-glucopyranoside + acetyl-CoA = mycothiol + CoA + H(+). In terms of biological role, catalyzes the transfer of acetyl from acetyl-CoA to desacetylmycothiol (Cys-GlcN-Ins) to form mycothiol. In Saccharomonospora viridis (strain ATCC 15386 / DSM 43017 / JCM 3036 / CCUG 5913 / NBRC 12207 / NCIMB 9602 / P101) (Thermoactinomyces viridis), this protein is Mycothiol acetyltransferase.